We begin with the raw amino-acid sequence, 414 residues long: Esterase FrsA (414 aa).

Belongs to the FrsA family.

The catalysed reaction is a carboxylic ester + H2O = an alcohol + a carboxylate + H(+). Functionally, catalyzes the hydrolysis of esters. This chain is Esterase FrsA, found in Klebsiella pneumoniae subsp. pneumoniae (strain ATCC 700721 / MGH 78578).